A 578-amino-acid polypeptide reads, in one-letter code: Proline--tRNA ligase (578 aa).

This sequence belongs to the class-II aminoacyl-tRNA synthetase family. ProS type 1 subfamily. Homodimer.

It is found in the cytoplasm. The catalysed reaction is tRNA(Pro) + L-proline + ATP = L-prolyl-tRNA(Pro) + AMP + diphosphate. Catalyzes the attachment of proline to tRNA(Pro) in a two-step reaction: proline is first activated by ATP to form Pro-AMP and then transferred to the acceptor end of tRNA(Pro). As ProRS can inadvertently accommodate and process non-cognate amino acids such as alanine and cysteine, to avoid such errors it has two additional distinct editing activities against alanine. One activity is designated as 'pretransfer' editing and involves the tRNA(Pro)-independent hydrolysis of activated Ala-AMP. The other activity is designated 'posttransfer' editing and involves deacylation of mischarged Ala-tRNA(Pro). The misacylated Cys-tRNA(Pro) is not edited by ProRS. The protein is Proline--tRNA ligase of Burkholderia pseudomallei (strain K96243).